A 185-amino-acid chain; its full sequence is GTP cyclohydrolase 1 (185 aa).

Positions 75, 78, and 146 each coordinate Zn(2+).

It belongs to the GTP cyclohydrolase I family. In terms of assembly, toroid-shaped homodecamer, composed of two pentamers of five dimers.

The catalysed reaction is GTP + H2O = 7,8-dihydroneopterin 3'-triphosphate + formate + H(+). The protein operates within cofactor biosynthesis; 7,8-dihydroneopterin triphosphate biosynthesis; 7,8-dihydroneopterin triphosphate from GTP: step 1/1. The polypeptide is GTP cyclohydrolase 1 (Methylococcus capsulatus (strain ATCC 33009 / NCIMB 11132 / Bath)).